We begin with the raw amino-acid sequence, 135 residues long: Aspartate 1-decarboxylase (135 aa).

Serine 25 functions as the Schiff-base intermediate with substrate; via pyruvic acid in the catalytic mechanism. Serine 25 bears the Pyruvic acid (Ser) mark. Threonine 57 contributes to the substrate binding site. Catalysis depends on tyrosine 58, which acts as the Proton donor. Residue 73–75 (GAA) coordinates substrate.

Belongs to the PanD family. As to quaternary structure, heterooctamer of four alpha and four beta subunits. The cofactor is pyruvate. Post-translationally, is synthesized initially as an inactive proenzyme, which is activated by self-cleavage at a specific serine bond to produce a beta-subunit with a hydroxyl group at its C-terminus and an alpha-subunit with a pyruvoyl group at its N-terminus.

Its subcellular location is the cytoplasm. It carries out the reaction L-aspartate + H(+) = beta-alanine + CO2. The protein operates within cofactor biosynthesis; (R)-pantothenate biosynthesis; beta-alanine from L-aspartate: step 1/1. Functionally, catalyzes the pyruvoyl-dependent decarboxylation of aspartate to produce beta-alanine. The sequence is that of Aspartate 1-decarboxylase from Mycobacterium sp. (strain JLS).